The primary structure comprises 161 residues: AQDAITAVINSADVQGKYLDTAALEKLKAYFSTGELRVRAATTISANAAAIVKEAVAKSLLYSDITRPGGNMYTTRRYAACIRDLDYYLRYATYAMLAGDPSILDERVLNGLKETYNSLGVPVGATVQAIQAIKEVTASLVGAKAGKEMGIYLDYISSGLS.

An N4-methylasparagine modification is found at asparagine 71. Cysteine 81 is a binding site for (2R,3E)-phycocyanobilin.

This sequence belongs to the phycobiliprotein family. As to quaternary structure, heterodimer of an alpha and a beta chain. Contains one covalently linked phycocyanobilin chromophore.

The protein resides in the cellular thylakoid membrane. In terms of biological role, light-harvesting photosynthetic bile pigment-protein from the phycobiliprotein complex. Allophycocyanin has a maximum absorption at approximately 650 nanometers. This is Allophycocyanin beta chain (apcB) from Anabaena variabilis.